The primary structure comprises 309 residues: Putative taste receptor type 2 member 33 (309 aa).

A topological domain (extracellular) is located at residue Met1. A helical membrane pass occupies residues 2–22; sequence VYFLPIIFSILVVFAFVLGNF. The Cytoplasmic portion of the chain corresponds to 23-46; it reads SNGFIALVNVIDWVKRQKISSADQ. The helical transmembrane segment at 47–67 threads the bilayer; sequence ILTALVVSRVGLLWVILLHWY. The Extracellular segment spans residues 68–86; it reads ANVFNSALYSLEVRIVASN. The N-linked (GlcNAc...) asparagine glycan is linked to Asn86. The helical transmembrane segment at 87–107 threads the bilayer; sequence ISAVINHFSIWLAASLSIFYL. Residues 108–127 are Cytoplasmic-facing; that stretch reads LKIANFSNLIFLHLKKRIKS. A helical membrane pass occupies residues 128–148; sequence VVLVILLGPLVFLICNLAVIT. At 149-181 the chain is on the extracellular side; sequence MDERVWTKEYEGNVTWKIKLRNAIHLSSLTVTT. Residue Asn161 is glycosylated (N-linked (GlcNAc...) asparagine). Residues 182 to 202 traverse the membrane as a helical segment; that stretch reads LANLIPFTLSLICFLLLICSL. Residues 203–229 are Cytoplasmic-facing; sequence CKHLKKMQLHSKGSQDPSTKVHIKALQ. A helical transmembrane segment spans residues 230 to 250; sequence TVISFLMLCAIYFLSIMISVW. The Extracellular portion of the chain corresponds to 251-259; sequence NLRSLENKP. Residues 260–280 traverse the membrane as a helical segment; sequence VFMFCKAIRFSYPSIHPFILI. At 281 to 309 the chain is on the cytoplasmic side; that stretch reads WGNKKLKQTFLSVFWQVRYWVKGEKPSSP.

Belongs to the G-protein coupled receptor T2R family.

The protein localises to the membrane. In terms of biological role, putative taste receptor which may play a role in the perception of bitterness. The chain is Putative taste receptor type 2 member 33 from Homo sapiens (Human).